Consider the following 463-residue polypeptide: L-seryl-tRNA(Sec) selenium transferase (463 aa).

Lysine 295 carries the post-translational modification N6-(pyridoxal phosphate)lysine.

The protein belongs to the SelA family. Homodecamer; pentamer of dimers. Binds only one seryl-tRNA(Sec) per dimer. It depends on pyridoxal 5'-phosphate as a cofactor.

It is found in the cytoplasm. It carries out the reaction L-seryl-tRNA(Sec) + selenophosphate + H(+) = L-selenocysteinyl-tRNA(Sec) + phosphate. Its pathway is aminoacyl-tRNA biosynthesis; selenocysteinyl-tRNA(Sec) biosynthesis; selenocysteinyl-tRNA(Sec) from L-seryl-tRNA(Sec) (bacterial route): step 1/1. Functionally, converts seryl-tRNA(Sec) to selenocysteinyl-tRNA(Sec) required for selenoprotein biosynthesis. In Salmonella paratyphi A (strain AKU_12601), this protein is L-seryl-tRNA(Sec) selenium transferase.